The chain runs to 357 residues: G-protein coupled receptor 183 (357 aa).

Residues 1 to 32 (MANNFTTPLAASHGNNCDLYAHHSTARILMPL) are Extracellular-facing. N-linked (GlcNAc...) asparagine glycosylation occurs at Asn-4. The helical transmembrane segment at 33–53 (HYSLVFIIGLVGNLLALVVIV) threads the bilayer. Residues 54–68 (QNRKKINSTTLYSMN) lie on the Cytoplasmic side of the membrane. A helical membrane pass occupies residues 69–89 (LVISDILFTTALPTRIVYYAL). Arg-83 is a 7alpha,25-dihydroxycholesterol binding site. Topologically, residues 90-101 (GFDWRIGDALCR) are extracellular. Cys-100 and Cys-177 form a disulfide bridge. Residues 102–122 (ITALLFYINTYAGVNFMTCLS) form a helical membrane-spanning segment. Residues Tyr-108 and Tyr-112 each contribute to the 7alpha,25-dihydroxycholesterol site. Residues 122–130 (SIDRFFAVV) form an interaction with G proteins region. Residues 123 to 143 (IDRFFAVVHPLRYNKIKRIEY) are Cytoplasmic-facing. Residues 144 to 164 (AKGICVFVWILVFAQTLPLLL) form a helical membrane-spanning segment. Residues 165–190 (KPMSKQEADKTTCMEYPNFEGTASLP) lie on the Extracellular side of the membrane. Residues 191-211 (WILLGACLLGYVLPLAIILLC) traverse the membrane as a helical segment. The Cytoplasmic portion of the chain corresponds to 212–240 (YSQICCKLFRTAKQNPLTEKSGVNKKALN). The helical transmembrane segment at 241-261 (TIILIIGVFVLCFTPYHVAIM) threads the bilayer. Position 256 (Tyr-256) interacts with 7alpha,25-dihydroxycholesterol. Topologically, residues 262–287 (QHMVKTLYAPGALGCGVRHSFQISLH) are extracellular. The chain crosses the membrane as a helical span at residues 288–308 (FTVCLMNFNCCMDPFIYFFAC). Topologically, residues 309-357 (KGYKRKVMKMLKRQVSVSISSAVRSAPEENSREMTESQMMIHSKASNGR) are cytoplasmic. A phosphoserine mark is found at Ser-324 and Ser-345. A disordered region spans residues 336 to 357 (EENSREMTESQMMIHSKASNGR). The segment covering 344-357 (ESQMMIHSKASNGR) has biased composition (polar residues).

Belongs to the G-protein coupled receptor 1 family. Homodimer and heterodimer. Heterodimerizes with CXCR5; leading to modulate the interaction between of CXCL13 and CXCR5.

It localises to the cell membrane. G-protein coupled receptor expressed in lymphocytes that acts as a chemotactic receptor for B-cells, T-cells, splenic dendritic cells, monocytes/macrophages and astrocytes. Receptor for oxysterol 7-alpha,25-dihydroxycholesterol (7-alpha,25-OHC) and other related oxysterols. Mediates cell positioning and movement of a number of cells by binding the 7-alpha,25-OHC ligand that forms a chemotactic gradient. Binding of 7-alpha,25-OHC mediates the correct localization of B-cells during humoral immune responses. Guides B-cell movement along the B-cell zone-T-cell zone boundary and later to interfollicular and outer follicular regions. Its specific expression during B-cell maturation helps position B-cells appropriately for mounting T-dependent antibody responses. Collaborates with CXCR5 to mediate B-cell migration; probably by forming a heterodimer with CXCR5 that affects the interaction between of CXCL13 and CXCR5. Also acts as a chemotactic receptor for some T-cells upon binding to 7-alpha,25-OHC ligand. Promotes follicular helper T (Tfh) cells differentiation by positioning activated T-cells at the follicle-T-zone interface, promoting contact of newly activated CD4 T-cells with activated dendritic cells and exposing them to Tfh-cell-promoting inducible costimulator (ICOS) ligand. Expression in splenic dendritic cells is required for their homeostasis, localization and ability to induce B- and T-cell responses: GPR183 acts as a chemotactic receptor in dendritic cells that mediates the accumulation of CD4(+) dendritic cells in bridging channels. Regulates migration of astrocytes and is involved in communication between astrocytes and macrophages. Promotes osteoclast precursor migration to bone surfaces. Signals constitutively through G(i)-alpha, but not G(s)-alpha or G(q)-alpha. Signals constitutively also via MAPK1/3 (ERK1/2). This is G-protein coupled receptor 183 (Gpr183) from Rattus norvegicus (Rat).